The sequence spans 190 residues: Large ribosomal subunit protein bL9 (190 aa).

It belongs to the bacterial ribosomal protein bL9 family.

Binds to the 23S rRNA. In Rhodobacter capsulatus (strain ATCC BAA-309 / NBRC 16581 / SB1003), this protein is Large ribosomal subunit protein bL9.